The following is an 84-amino-acid chain: Tetrahydromethanopterin S-methyltransferase subunit G (84 aa).

Residues 50–70 (IGILYGLVIGIILSYILPALI) traverse the membrane as a helical segment.

It belongs to the MtrG family. As to quaternary structure, the complex is composed of 8 subunits; MtrA, MtrB, MtrC, MtrD, MtrE, MtrF, MtrG and MtrH.

It is found in the cell membrane. It catalyses the reaction 5-methyl-5,6,7,8-tetrahydromethanopterin + coenzyme M + 2 Na(+)(in) = 5,6,7,8-tetrahydromethanopterin + methyl-coenzyme M + 2 Na(+)(out). The protein operates within one-carbon metabolism; methanogenesis from CO(2); methyl-coenzyme M from 5,10-methylene-5,6,7,8-tetrahydromethanopterin: step 2/2. In terms of biological role, part of a complex that catalyzes the formation of methyl-coenzyme M and tetrahydromethanopterin from coenzyme M and methyl-tetrahydromethanopterin. This is an energy-conserving, sodium-ion translocating step. This chain is Tetrahydromethanopterin S-methyltransferase subunit G, found in Methanocaldococcus jannaschii (strain ATCC 43067 / DSM 2661 / JAL-1 / JCM 10045 / NBRC 100440) (Methanococcus jannaschii).